A 158-amino-acid chain; its full sequence is NAD(P)H-quinone oxidoreductase subunit J, chloroplastic (158 aa).

This sequence belongs to the complex I 30 kDa subunit family. As to quaternary structure, NDH is composed of at least 16 different subunits, 5 of which are encoded in the nucleus.

Its subcellular location is the plastid. The protein localises to the chloroplast thylakoid membrane. It carries out the reaction a plastoquinone + NADH + (n+1) H(+)(in) = a plastoquinol + NAD(+) + n H(+)(out). The enzyme catalyses a plastoquinone + NADPH + (n+1) H(+)(in) = a plastoquinol + NADP(+) + n H(+)(out). Functionally, NDH shuttles electrons from NAD(P)H:plastoquinone, via FMN and iron-sulfur (Fe-S) centers, to quinones in the photosynthetic chain and possibly in a chloroplast respiratory chain. The immediate electron acceptor for the enzyme in this species is believed to be plastoquinone. Couples the redox reaction to proton translocation, and thus conserves the redox energy in a proton gradient. This is NAD(P)H-quinone oxidoreductase subunit J, chloroplastic from Arabis hirsuta (Hairy rock-cress).